The sequence spans 772 residues: Alpha-xylosidase (772 aa).

The active-site Nucleophile is Asp416. Glu419 is an active-site residue. The active-site Proton donor is the Asp482.

The protein belongs to the glycosyl hydrolase 31 family. In terms of assembly, homohexamer.

The catalysed reaction is Hydrolysis of terminal, non-reducing alpha-D-xylose residues with release of alpha-D-xylose.. Its function is as follows. Can catalyze the transfer of alpha-xylosyl residue from alpha-xyloside to xylose, glucose, mannose, fructose, maltose, isomaltose, nigerose, kojibiose, sucrose and trehalose. This chain is Alpha-xylosidase (yicI), found in Escherichia coli (strain K12).